The sequence spans 871 residues: Pentatricopeptide repeat-containing protein DOT4, chloroplastic (871 aa).

The N-terminal 28 residues, 1-28 (MAMLVTNLSSSSFCFFSSPHLQNQKEIR), are a transit peptide targeting the chloroplast. PPR repeat units follow at residues 60–94 (SVTD…DIDP), 96–127 (TLCS…GFVI), 128–158 (DSNL…VKIE), 159–193 (KALF…GVEM), 194–228 (DSYT…GFGE), 229–259 (RNSV…MTER), 260–294 (DVIS…GIEI), 295–329 (DLAT…CFSR), 330–360 (EDRF…MSDR), 361–395 (SVVS…GISP), 396–430 (DVYT…DLGF), 431–465 (DIFV…DIIS), 466–497 (WNTI…RFSP), 498–532 (DERT…GYFS), 533–563 (DRHV…IASK), 564–598 (DLVS…GIEA), 599–629 (DEIS…MRHE), and 635–665 (TVEH…MPIP). The segment at 670–745 (IWGALLCGCR…NPGCSWIEIK (76 aa)) is type E motif. The segment at 746–776 (GRVNIFVAGDSSNPETENIEAFLRKVRARMI) is type E(+) motif. Positions 777–871 (EEGYSPLTKY…DGHCSCRGFW (95 aa)) are type DYW motif.

Belongs to the PPR family. PCMP-H subfamily. Zn(2+) serves as cofactor. As to expression, weakly expressed in leaves.

The protein resides in the plastid. Its subcellular location is the chloroplast. Its function is as follows. Plays a major role in single RNA editing events in chloroplasts. Acts as a site-recognition transacting factor involved in the edition of the unique site (corresponding to cytidine-488) of rpoC1, which is a plastid-encoded subunit of the chloroplast DNA-directed RNA polymerase. May provide the catalytic activity for editing site conversion. Involved in leaf vasculature patterning. The protein is Pentatricopeptide repeat-containing protein DOT4, chloroplastic of Arabidopsis thaliana (Mouse-ear cress).